Consider the following 244-residue polypeptide: Purine nucleoside phosphorylase HI_0175 (244 aa).

Residues His70, Cys105, and His122 each coordinate Zn(2+).

Belongs to the purine nucleoside phosphorylase YfiH/LACC1 family. As to quaternary structure, homodimer. It depends on Cu(2+) as a cofactor. Zn(2+) is required as a cofactor.

The enzyme catalyses adenosine + phosphate = alpha-D-ribose 1-phosphate + adenine. It catalyses the reaction S-methyl-5'-thioadenosine + phosphate = 5-(methylsulfanyl)-alpha-D-ribose 1-phosphate + adenine. The catalysed reaction is inosine + phosphate = alpha-D-ribose 1-phosphate + hypoxanthine. It carries out the reaction adenosine + H2O + H(+) = inosine + NH4(+). Its function is as follows. Purine nucleoside enzyme that catalyzes the phosphorolysis of adenosine and inosine nucleosides, yielding D-ribose 1-phosphate and the respective free bases, adenine and hypoxanthine. Also catalyzes the phosphorolysis of S-methyl-5'-thioadenosine into adenine and S-methyl-5-thio-alpha-D-ribose 1-phosphate. Also has adenosine deaminase activity. The sequence is that of Purine nucleoside phosphorylase HI_0175 from Haemophilus influenzae (strain ATCC 51907 / DSM 11121 / KW20 / Rd).